Here is a 638-residue protein sequence, read N- to C-terminus: Neuroendocrine convertase 2 (638 aa).

The N-terminal stretch at 1–25 (MKGGCVSQWKAAAGFLFCVMVFASA) is a signal peptide. Residues 26–109 (ERPVFTNHFL…QQEGFDRKKR (84 aa)) constitute a propeptide that is removed on maturation. Residues 129-453 (QWYLINTGQA…YGVLDAGAMV (325 aa)) enclose the Peptidase S8 domain. Catalysis depends on charge relay system residues D167 and H208. Disulfide bonds link C225/C376 and C317/C347. N375 carries an N-linked (GlcNAc...) asparagine glycan. Residue S384 is the Charge relay system of the active site. In terms of domain architecture, P/Homo B spans 461–597 (TVPERFHCVG…TLMLHGTQSA (137 aa)). C468 and C494 form a disulfide bridge. N-linked (GlcNAc...) asparagine glycans are attached at residues N514 and N524.

The protein belongs to the peptidase S8 family. Furin subfamily.

The protein resides in the cytoplasmic vesicle. The protein localises to the secretory vesicle. It localises to the secreted. It catalyses the reaction Release of protein hormones and neuropeptides from their precursors, generally by hydrolysis of -Lys-Arg-|- bonds.. Functionally, serine endopeptidase which is involved in the processing of hormone and other protein precursors at sites comprised of pairs of basic amino acid residues. Responsible for the release of glucagon from proglucagon in pancreatic A cells. In Pongo abelii (Sumatran orangutan), this protein is Neuroendocrine convertase 2 (PCSK2).